Here is a 453-residue protein sequence, read N- to C-terminus: uncharacterized protein (453 aa).

The region spanning 5 to 63 is the TRAM domain; sequence LLKKNQSVELTIEDLTHDGSGVGKIDGYPLFIPNALPGEKITAKITKLNKNYGFARMEN. C76, C82, C85, and C162 together coordinate [4Fe-4S] cluster. Residues Q285, Y314, E335, and D383 each coordinate S-adenosyl-L-methionine. Residue C410 is the Nucleophile of the active site.

This sequence belongs to the class I-like SAM-binding methyltransferase superfamily. RNA M5U methyltransferase family.

This is an uncharacterized protein from Listeria innocua serovar 6a (strain ATCC BAA-680 / CLIP 11262).